A 555-amino-acid polypeptide reads, in one-letter code: Dihydroxy-acid dehydratase (555 aa).

Cys46 contributes to the [2Fe-2S] cluster binding site. Residue Asp78 participates in Mg(2+) binding. Cys119 lines the [2Fe-2S] cluster pocket. The Mg(2+) site is built by Asp120 and Lys121. Position 121 is an N6-carboxylysine (Lys121). Cys191 is a [2Fe-2S] cluster binding site. Mg(2+) is bound at residue Glu442. The active-site Proton acceptor is Ser468.

It belongs to the IlvD/Edd family. Homodimer. [2Fe-2S] cluster serves as cofactor. It depends on Mg(2+) as a cofactor.

It catalyses the reaction (2R)-2,3-dihydroxy-3-methylbutanoate = 3-methyl-2-oxobutanoate + H2O. The catalysed reaction is (2R,3R)-2,3-dihydroxy-3-methylpentanoate = (S)-3-methyl-2-oxopentanoate + H2O. It functions in the pathway amino-acid biosynthesis; L-isoleucine biosynthesis; L-isoleucine from 2-oxobutanoate: step 3/4. The protein operates within amino-acid biosynthesis; L-valine biosynthesis; L-valine from pyruvate: step 3/4. Functionally, functions in the biosynthesis of branched-chain amino acids. Catalyzes the dehydration of (2R,3R)-2,3-dihydroxy-3-methylpentanoate (2,3-dihydroxy-3-methylvalerate) into 2-oxo-3-methylpentanoate (2-oxo-3-methylvalerate) and of (2R)-2,3-dihydroxy-3-methylbutanoate (2,3-dihydroxyisovalerate) into 2-oxo-3-methylbutanoate (2-oxoisovalerate), the penultimate precursor to L-isoleucine and L-valine, respectively. In Thermus thermophilus (strain ATCC BAA-163 / DSM 7039 / HB27), this protein is Dihydroxy-acid dehydratase.